Reading from the N-terminus, the 375-residue chain is Mitogen-activated protein kinase 1 (375 aa).

The 287-residue stretch at Arg-43–Leu-329 folds into the Protein kinase domain. Residues Ile-49 to Val-57 and Lys-72 each bind ATP. The active-site Proton acceptor is Asp-169. Thr-201 bears the Phosphothreonine mark. A TXY motif is present at residues Thr-201–Tyr-203. Tyr-203 is subject to Phosphotyrosine. Thr-206 carries the phosphothreonine modification.

The protein belongs to the protein kinase superfamily. CMGC Ser/Thr protein kinase family. MAP kinase subfamily. It depends on Mg(2+) as a cofactor. In terms of processing, activated by wounding and UV-C in a cultivar-dependent manner; phosphorylated in cv. Pungchon but not in cv. Subicho.

It catalyses the reaction L-seryl-[protein] + ATP = O-phospho-L-seryl-[protein] + ADP + H(+). The enzyme catalyses L-threonyl-[protein] + ATP = O-phospho-L-threonyl-[protein] + ADP + H(+). Activated by threonine and tyrosine phosphorylation. Its function is as follows. Stress-inducible protein kinase involved in oxidative stress-mediated and innate immune MAP kinase signaling cascades. The chain is Mitogen-activated protein kinase 1 from Capsicum annuum (Capsicum pepper).